A 393-amino-acid polypeptide reads, in one-letter code: FAD-dependent monooxygenase dbaB (393 aa).

The first 23 residues, 1-23 (MTRTSPTLPVIILGAGMVGLTLA), serve as a signal peptide directing secretion. FAD-binding residues include Glu37 and Arg107. Asn128 is a glycosylation site (N-linked (GlcNAc...) asparagine). Residue Tyr221 is part of the active site. Asn233 carries N-linked (GlcNAc...) asparagine glycosylation. Asp320 contributes to the FAD binding site.

Belongs to the paxM FAD-dependent monooxygenase family. FAD is required as a cofactor.

The protein operates within secondary metabolite biosynthesis. Its function is as follows. FAD-dependent monooxygenase; part of the gene cluster that mediates the biosynthesis of the antibiotic 2,4-dihydroxy-3-methyl-6-(2-oxopropyl)benzaldehyde (DHMBA) and its derivatives. The direct non-reducing polyketide synthase dbaI product is 2,4-dihydroxy-3-methyl-6-(2-oxopropyl)benzaldehyde (DHMBA), produced by condensation of one acetyl-CoA starter unit with 4 malonyl-CoA units and one methylation step. The FAD-dependent monooxygenase dbaH is responsible for the synthesis of yellow pigments derived from the oxidation of DHMBA. The roles of dbaB, C, E and F have still to be determined. This Emericella nidulans (strain FGSC A4 / ATCC 38163 / CBS 112.46 / NRRL 194 / M139) (Aspergillus nidulans) protein is FAD-dependent monooxygenase dbaB.